Here is a 549-residue protein sequence, read N- to C-terminus: MDDDQQFCLRWNNHQSTLISVFDTLLENETLVDCTLAAEGKFLKAHKVVLSACSPYFATLLQEQYDKHPIFILKDVKYQELRAMMDYMYRGEVNISQDQLAALLKAAESLQIKGLSDNRTGGGVAPKPESSGHHRGGKLSGAYTLEQTKRARLATGGAMDTSGDVSGSREGSSSPSRRRRKVRRRSMENDAHDNSNSSVLQAAASNQSILQQTGAGLAVSALVTTQLSSGPAAGTSSQASSTQQQQPLTSTNVTKKTESAKLTSSTAAPASGASASAAVQQAHLHQQQAQTTSDAINTENVQAQSQGGAQGVQGDDEDIDEGSAVGGPNSATGPNPASASASAVHAGVVVKQLASVVDKSSSNHKHKIKDNSVSSVGSEMVIEPKAEYDDDAHDENVEDLTLDEEDMTMEELDQTAGTSQGGEGSSQTYATWQHDRSQDELGLMAQDAQQRDPQDVSTNQTVVLPHYSIYHYYSNIYYLLSHTTIYEADRTVSVSCPGKLNCLPQRNDLQETKSVTVLYTIHFFLYILMIYIFVLCKILPRIVFVWVST.

Positions 32–97 (VDCTLAAEGK…MYRGEVNISQ (66 aa)) constitute a BTB domain. Disordered regions lie at residues 115-200 (LSDN…SSVL) and 228-340 (SSGP…ASAS). Low complexity-rich tracts occupy residues 162–175 (SGDV…SSSP), 228–251 (SSGP…LTST), 263–293 (TSST…QTTS), and 329–340 (NSATGPNPASAS).

Mostly neuronal.

It is found in the nucleus. Putative transcription factor required for axon growth and guidance in the central and peripheral nervous systems. Repels CNS axons away from the midline by promoting the expression of the midline repellent sli and its receptor robo. In Drosophila melanogaster (Fruit fly), this protein is Longitudinals lacking protein, isoforms H/M/V.